A 106-amino-acid chain; its full sequence is uncharacterized protein (106 aa).

This is an uncharacterized protein from Escherichia coli (strain K12).